Reading from the N-terminus, the 251-residue chain is Small ribosomal subunit protein uS2 (251 aa).

It belongs to the universal ribosomal protein uS2 family.

The polypeptide is Small ribosomal subunit protein uS2 (Cereibacter sphaeroides (strain ATCC 17029 / ATH 2.4.9) (Rhodobacter sphaeroides)).